Reading from the N-terminus, the 1203-residue chain is Cingulin (1203 aa).

The interval 7-357 is head; sequence MAEPRGPVDH…VMVSSGSTKA (351 aa). A disordered region spans residues 25–48; it reads EPVSGAEMGTLRRGGRRPAKDARA. A ZIM motif is present at residues 48 to 62; sequence ASTYGVAVRVQGIAG. Residues 54 to 67 form an interaction with TJP1/ZO1 region; that stretch reads AVRVQGIAGQPFVV. Positions 89–127 are disordered; sequence GASGALSSDLELPENPYSQVKGFPAPSQSSTSDEEPGAY. A phosphoserine mark is found at Ser-95, Ser-96, Ser-135, Ser-137, Ser-140, Ser-155, Ser-165, Ser-214, Ser-217, Ser-258, Ser-276, Ser-338, and Ser-351. Residues 186–266 are disordered; sequence DSQLGGQARG…LSPLSGFSRS (81 aa). Basic and acidic residues predominate over residues 207–231; the sequence is EQRKRSKSLDSRLPRDTFEERERQS. Positions 232 to 266 are enriched in polar residues; it reads TNHWTSSTKYDNHVGTSKQPAQSQNLSPLSGFSRS. Positions 358-1160 form a coiled coil; that stretch reads VAGQGELTRK…SLEKDSWRKA (803 aa). Lys-579 carries the N6-acetyllysine modification. Thr-712 bears the Phosphothreonine mark. 2 disordered regions span residues 1034-1053 and 1154-1181; these read LASS…LESQ and KDSW…EEFD. The segment covering 1044-1053 has biased composition (low complexity); it reads SASLSQLESQ. The segment at 1161-1203 is tail; that stretch reads SRSAAESALKNEGLSSDEEFDSVYDPSSIASLLTESNLQTSSC. A phosphoserine mark is found at Ser-1175, Ser-1176, and Ser-1182.

Belongs to the cingulin family. In terms of assembly, homodimer. Interacts with TJP1/ZO1. Interacts with SPEF1. In terms of tissue distribution, localized on the cytoplasmic face of tight junctions of polarized epithelia and some endothelia. Expressed in pancreas, kidney, liver and lung, but not in skeletal muscle, placenta, brain or heart.

It is found in the cell junction. The protein localises to the tight junction. Its function is as follows. Probably plays a role in the formation and regulation of the tight junction (TJ) paracellular permeability barrier. The chain is Cingulin from Homo sapiens (Human).